We begin with the raw amino-acid sequence, 504 residues long: FAD-dependent monooxygenase nsrK (504 aa).

Residue arginine 146 coordinates FAD. Arginine 227 is an active-site residue. FAD contacts are provided by aspartate 340 and glycine 353.

This sequence belongs to the paxM FAD-dependent monooxygenase family. FAD serves as cofactor.

It participates in secondary metabolite biosynthesis. Its function is as follows. FAD-dependent monooxygenase; part of the gene cluster that mediates the biosynthesis of the tetrahydroxanthone dimer neosartorin, which exhibits antibacterial activity. The two different monomeric units appear to be synthesized by the same set of enzymes, among which the Baeyer-Villiger monooxygenase nsrF is the key enzyme for the divergence of the biosynthetic routes. The pathway begins with the synthesis of atrochrysone thioester by the polyketide synthase nsrB. The atrochrysone carboxyl ACP thioesterase nsrC then breaks the thioester bond and releases the atrochrysone carboxylic acid from AacuL. Atrochrysone carboxylic acid is decarboxylated by the decarboxylase nsrE, and oxidized by the anthrone oxygenase nsrD to yield emodin. Emodin is then reduced to emodin hydroquinone by the oxidoreductase nsrR. A-ring reduction by the short chain dehydrogenase nsrJ, dehydration by the scytalone dehydratase-like protein nsrI and probable spontaneous re-oxidation, results in overall deoxygenation to chrysophanol. The Baeyer-Villiger monooxygenase nsrF accepts chrysophanol as a substrate to insert one oxygen atom at two different positions to yield the precursors of both monomric units. NsrF is promiscuous/flexible in interacting with the 2 (non methylated and methylated) aromatic rings of chrysophanol, thus diverging the biosynthetic pathway at this point. After the hydrolysis of the lactones, methylesterification by the methyltransferase nsrG yields respectively moniliphenone and 2,2',6'-trihydroxy-4-methyl-6-methoxya-cyldiphenylmethanone. The next steps are the hydroxylation by the FAD-dependent monooxygenase nsrK, followed by isomerization by the monooxygenase nsrQ. The short chain dehydrogenase/reductase nsrO then catalyzes the C-5 ketoreduction to give the xanthone skeleton of blennolide C and 5-acetylblennolide A. The acetyltransferase nsrL has a strict substrate specificity and uses only blennolide A but not blennolide C to yield 5-acetylblennolide A as the single-acetylated product. In the final step of the biosynthesis, the heterodimerization of the 2 xanthones, blennolide C and 5-acetylblennolide A, is catalyzed by the cytochrome P450 monooxygenase nsrP. NsrP can utilize at least three different xanthones as its substrates to perform the dimerization reaction. This Aspergillus novofumigatus (strain IBT 16806) protein is FAD-dependent monooxygenase nsrK.